We begin with the raw amino-acid sequence, 339 residues long: Anthranilate phosphoribosyltransferase (339 aa).

5-phospho-alpha-D-ribose 1-diphosphate-binding positions include Gly-82, 85–86 (GD), 92–95 (NIST), 110–118 (KHGNSSISS), and Ser-122. Gly-82 provides a ligand contact to anthranilate. Position 94 (Ser-94) interacts with Mg(2+). Asn-113 contributes to the anthranilate binding site. Arg-168 is an anthranilate binding site. Positions 227 and 228 each coordinate Mg(2+).

It belongs to the anthranilate phosphoribosyltransferase family. In terms of assembly, homodimer. Mg(2+) serves as cofactor.

It carries out the reaction N-(5-phospho-beta-D-ribosyl)anthranilate + diphosphate = 5-phospho-alpha-D-ribose 1-diphosphate + anthranilate. The protein operates within amino-acid biosynthesis; L-tryptophan biosynthesis; L-tryptophan from chorismate: step 2/5. In terms of biological role, catalyzes the transfer of the phosphoribosyl group of 5-phosphorylribose-1-pyrophosphate (PRPP) to anthranilate to yield N-(5'-phosphoribosyl)-anthranilate (PRA). The chain is Anthranilate phosphoribosyltransferase from Ruthia magnifica subsp. Calyptogena magnifica.